The sequence spans 356 residues: 3-dehydroquinate synthase (356 aa).

Residues 69 to 74, 103 to 107, 127 to 128, lysine 140, lysine 149, and 167 to 170 contribute to the NAD(+) site; these read DGEKFK, GVIGD, TT, and CLKT. Zn(2+) is bound by residues glutamate 182, histidine 245, and histidine 262.

This sequence belongs to the sugar phosphate cyclases superfamily. Dehydroquinate synthase family. Co(2+) is required as a cofactor. The cofactor is Zn(2+). NAD(+) serves as cofactor.

It localises to the cytoplasm. The enzyme catalyses 7-phospho-2-dehydro-3-deoxy-D-arabino-heptonate = 3-dehydroquinate + phosphate. It functions in the pathway metabolic intermediate biosynthesis; chorismate biosynthesis; chorismate from D-erythrose 4-phosphate and phosphoenolpyruvate: step 2/7. In terms of biological role, catalyzes the conversion of 3-deoxy-D-arabino-heptulosonate 7-phosphate (DAHP) to dehydroquinate (DHQ). The sequence is that of 3-dehydroquinate synthase from Psychromonas ingrahamii (strain DSM 17664 / CCUG 51855 / 37).